The sequence spans 182 residues: Small ribosomal subunit protein uS4c (182 aa).

The region spanning 82 to 143 (MRLDNILFRL…KERSKVLIQN (62 aa)) is the S4 RNA-binding domain.

This sequence belongs to the universal ribosomal protein uS4 family. As to quaternary structure, part of the 30S ribosomal subunit. Contacts protein S5. The interaction surface between S4 and S5 is involved in control of translational fidelity.

It is found in the plastid. The protein resides in the chloroplast. One of the primary rRNA binding proteins, it binds directly to 16S rRNA where it nucleates assembly of the body of the 30S subunit. In terms of biological role, with S5 and S12 plays an important role in translational accuracy. This chain is Small ribosomal subunit protein uS4c (rps4), found in Tigridia sp. (strain Lejeune 1997).